The chain runs to 564 residues: Septation ring formation regulator EzrA (564 aa).

At 1-2 (ME) the chain is on the extracellular side. The chain crosses the membrane as a helical span at residues 3–21 (FVIGLLALFLILFATGYLF). The Cytoplasmic segment spans residues 22-564 (RKNIYKEIDR…RLEADAKQPE (543 aa)). Coiled-coil stretches lie at residues 99–159 (QKSK…AYSH), 243–281 (KGYKLDHIQVEKELENLLKELKRAEDALLDELDLEEAAA), and 310–498 (KVPE…VELV).

It belongs to the EzrA family.

It localises to the cell membrane. Functionally, negative regulator of FtsZ ring formation; modulates the frequency and position of FtsZ ring formation. Inhibits FtsZ ring formation at polar sites. Interacts either with FtsZ or with one of its binding partners to promote depolymerization. The protein is Septation ring formation regulator EzrA of Bacillus licheniformis (strain ATCC 14580 / DSM 13 / JCM 2505 / CCUG 7422 / NBRC 12200 / NCIMB 9375 / NCTC 10341 / NRRL NRS-1264 / Gibson 46).